The primary structure comprises 416 residues: CapZ-interacting protein (416 aa).

Disordered stretches follow at residues 1-84 and 98-416; these read MEER…KSSP and AALL…DTKM. Over residues 8-20 the composition is skewed to polar residues; the sequence is TNANVDNSASPSV. Ser-17 bears the Phosphoserine mark. Ser-68 is subject to Phosphoserine; by MAPK8; in vitro. Ser-82 bears the Phosphoserine mark. Ser-83 is subject to Phosphoserine; by MAPK8; in vitro. Ser-105 is subject to Phosphoserine. Position 108 is a phosphoserine; by MAPK12 and MAPK13 (Ser-108). Ser-116, Ser-120, and Ser-123 each carry phosphoserine. A Phosphothreonine modification is found at Thr-124. Phosphoserine occurs at positions 126, 127, 135, and 143. Positions 159–176 are enriched in basic residues; sequence VRTRGSIKRRPPSRRFRR. Residue Ser-177 is modified to Phosphoserine. Position 179 is a phosphoserine; by MAPKAPK2 and MAPKAPK3 (Ser-179). Ser-216 carries the phosphoserine; by MAPK8; in vitro modification. An RCSD domain is found at 227–330; sequence GVRTLGPAEK…RVQNEEVGPE (104 aa). The residue at position 244 (Ser-244) is a Phosphoserine; by MAPKAPK2 or MAPKAPK3; in vitro. Residues 244-273 show a composition bias toward basic and acidic residues; that stretch reads SRTEKQEEDRATEEAKNGEKARRSSEEVDG. Ser-267, Ser-268, Ser-284, Ser-298, and Ser-333 each carry phosphoserine. Residues 292–349 are compositionally biased toward basic and acidic residues; it reads AENRCGSPREEKPAGEEAEMEKATEVKGERVQNEEVGPEHDSQETKKLEEGAAVKETP. Thr-336 bears the Phosphothreonine mark. Ser-351 bears the Phosphoserine mark. The span at 360-372 shows a compositional bias: basic and acidic residues; it reads DVPKQEKGKEKQQ. Polar residues predominate over residues 382-397; it reads SPQTGPAQLETSSEVQ.

As to quaternary structure, interacts with CAPZA2 and CAPZB. Post-translationally, dephosphorylation results in its dissociation from CAPZA2. In terms of tissue distribution, highly expressed in skeletal muscle and more weakly in cardiac muscle. Also expressed in several lymphoid organs, including spleen, thymus, peripheral blood leukocytes, lymph node and bone marrow.

Stress-induced phosphorylation of CAPZIP may regulate the ability of F-actin-capping protein to remodel actin filament assembly. This Homo sapiens (Human) protein is CapZ-interacting protein (RCSD1).